A 601-amino-acid chain; its full sequence is MEGADLLTAGVLFLFAAVAAVPLAARLGIGAVLGYLLAGIAIGPWGLGFISDVDEILHFSELGVVFLMFIIGLELNPSRLWQLRRSIFGVGAAQVLLSAAVLAGLLMLADFLWQAAVVGGIGLAMSSTAMALQLMREKGMNRSESGQLGFSVLLFQDLAVIPALALVPLLAGSADEHFDWFKVAMKVLAFAVMLIGGRYLLRPVFRFIAASGVREVFTAATLLLVLSAALFMDALGLSMALGTFIAGVLLAESEYRHELENAIDPFKGLLLGLFFISVGMSLNLGVLYTHLLWVAASVVILVVIKMLTLYLLARLYGIRSSERMQFASVLSQGGEFAFVLFSTASSQRLFQGDQMALLLVTVTLSMMTTPLLMKGIDKWLSRRLNGPEENDEKPWVEDDKPQVIVVGFGRFGQVIARLLMANKMRITVLERDIGAVNLMRKYGYKVYYGDATQVELLRSAGAEAAESIVITCNEPEDTMKLVELCQQHFPHLHILARARGRVEAHELLQAGVTQFSRETFSSALELGRKTLVSLGMHPHQAQRAQLHFRRLDMRMLRELIPEHSDMVQISRAREARRELEEIFQREMQQERRQLDGWDKFE.

The next 13 helical transmembrane spans lie at 4–24 (ADLL…VPLA), 29–49 (IGAV…GLGF), 55–75 (EILH…GLEL), 87–107 (IFGV…GLLM), 111–131 (FLWQ…TAMA), 152–172 (VLLF…LLAG), 177–197 (HFDW…LIGG), 207–227 (FIAA…LVLS), 230–250 (LFMD…GVLL), 262–282 (AIDP…GMSL), 284–304 (LGVL…LVVI), 324–344 (MQFA…FSTA), and 356–376 (ALLL…MKGI). The RCK N-terminal domain occupies 400-519 (KPQVIVVGFG…AGVTQFSRET (120 aa)).

The protein belongs to the monovalent cation:proton antiporter 2 (CPA2) transporter (TC 2.A.37) family. KefB subfamily. Interacts with the regulatory subunit KefG.

Its subcellular location is the cell inner membrane. In terms of biological role, pore-forming subunit of a potassium efflux system that confers protection against electrophiles. Catalyzes K(+)/H(+) antiport. The chain is Glutathione-regulated potassium-efflux system protein KefB from Salmonella dublin (strain CT_02021853).